The following is a 284-amino-acid chain: 2-dehydro-3-deoxyphosphooctonate aldolase (284 aa).

The protein belongs to the KdsA family.

The protein resides in the cytoplasm. It carries out the reaction D-arabinose 5-phosphate + phosphoenolpyruvate + H2O = 3-deoxy-alpha-D-manno-2-octulosonate-8-phosphate + phosphate. The protein operates within carbohydrate biosynthesis; 3-deoxy-D-manno-octulosonate biosynthesis; 3-deoxy-D-manno-octulosonate from D-ribulose 5-phosphate: step 2/3. It functions in the pathway bacterial outer membrane biogenesis; lipopolysaccharide biosynthesis. The polypeptide is 2-dehydro-3-deoxyphosphooctonate aldolase (Actinobacillus succinogenes (strain ATCC 55618 / DSM 22257 / CCUG 43843 / 130Z)).